Reading from the N-terminus, the 414-residue chain is ATP-dependent Clp protease ATP-binding subunit ClpX (414 aa).

A ClpX-type ZB domain is found at 1-51; that stretch reads MADSKTKKKCSFCGRSENEVGFLITGMNGYICDSCATQAYEITQEALGEGR. Zn(2+) contacts are provided by Cys10, Cys13, Cys32, and Cys35. 120–127 contacts ATP; the sequence is STGTGKTL.

This sequence belongs to the ClpX chaperone family. In terms of assembly, component of the ClpX-ClpP complex. Forms a hexameric ring that, in the presence of ATP, binds to fourteen ClpP subunits assembled into a disk-like structure with a central cavity, resembling the structure of eukaryotic proteasomes.

Functionally, ATP-dependent specificity component of the Clp protease. It directs the protease to specific substrates. Can perform chaperone functions in the absence of ClpP. The chain is ATP-dependent Clp protease ATP-binding subunit ClpX from Bacteroides thetaiotaomicron (strain ATCC 29148 / DSM 2079 / JCM 5827 / CCUG 10774 / NCTC 10582 / VPI-5482 / E50).